Consider the following 492-residue polypeptide: Gamma-aminobutyric acid receptor subunit alpha-3 (492 aa).

An N-terminal signal peptide occupies residues 1–28; the sequence is MIITQMSQFYMAGLGLLFLINILPGTTG. The Extracellular segment spans residues 29 to 274; sequence QVESRRQEPG…MTTHFHLKRK (246 aa). N-linked (GlcNAc...) asparagine glycosylation is present at N63. R119 is a 4-aminobutanoate binding site. 2 N-linked (GlcNAc...) asparagine glycosylation sites follow: N163 and N176. Residue T182 participates in 4-aminobutanoate binding. A disulfide bridge links C191 with C205. The N-linked (GlcNAc...) asparagine glycan is linked to N228. Residues 275-295 traverse the membrane as a helical segment; the sequence is IGYFVIQTYLPCIMTVILSQV. The Cytoplasmic portion of the chain corresponds to 296-305; the sequence is SFWLNRESVP. The helical transmembrane segment at 306–325 threads the bilayer; sequence ARTVFGVTTVLTMTTLSISA. Over 326-336 the chain is Extracellular; sequence RNSLPKVAYAT. The chain crosses the membrane as a helical span at residues 337 to 357; sequence AMDWFMAVCYAFVFSALIEFA. Topologically, residues 358-457 are cytoplasmic; sequence TVNYFTKRSW…TYNSVSKVDK (100 aa). S426 is subject to Phosphoserine. A Phosphothreonine modification is found at T427. S433 bears the Phosphoserine mark. The chain crosses the membrane as a helical span at residues 458 to 478; that stretch reads ISRIIFPVLFAIFNLVYWATY. Over 479 to 492 the chain is Extracellular; it reads VNRESAIKGMIRKQ.

Belongs to the ligand-gated ion channel (TC 1.A.9) family. Gamma-aminobutyric acid receptor (TC 1.A.9.5) subfamily. GABRA3 sub-subfamily. In terms of assembly, heteropentamer, formed by a combination of alpha (GABRA1-6), beta (GABRB1-3), gamma (GABRG1-3), delta (GABRD), epsilon (GABRE), rho (GABRR1-3), pi (GABRP) and theta (GABRQ) chains, each subunit exhibiting distinct physiological and pharmacological properties. Binds UBQLN1. Interacts with GPHN.

It is found in the postsynaptic cell membrane. Its subcellular location is the cell membrane. The catalysed reaction is chloride(in) = chloride(out). Functionally, alpha subunit of the heteropentameric ligand-gated chloride channel gated by gamma-aminobutyric acid (GABA), a major inhibitory neurotransmitter in the brain. GABA-gated chloride channels, also named GABA(A) receptors (GABAAR), consist of five subunits arranged around a central pore and contain GABA active binding site(s) located at the alpha and beta subunit interface(s). When activated by GABA, GABAARs selectively allow the flow of chloride anions across the cell membrane down their electrochemical gradient. Chloride influx into the postsynaptic neuron following GABAAR opening decreases the neuron ability to generate a new action potential, thereby reducing nerve transmission. The sequence is that of Gamma-aminobutyric acid receptor subunit alpha-3 (GABRA3) from Bos taurus (Bovine).